A 70-amino-acid polypeptide reads, in one-letter code: Small ribosomal subunit protein bS21 (70 aa).

It belongs to the bacterial ribosomal protein bS21 family.

This Azoarcus sp. (strain BH72) protein is Small ribosomal subunit protein bS21.